The chain runs to 268 residues: 4-hydroxy-tetrahydrodipicolinate reductase (268 aa).

An NAD(+)-binding site is contributed by 8 to 13 (GAAGRM). NADP(+) is bound at residue arginine 36. NAD(+)-binding positions include 99-101 (GTT) and 123-126 (AANF). Histidine 156 serves as the catalytic Proton donor/acceptor. Histidine 157 lines the (S)-2,3,4,5-tetrahydrodipicolinate pocket. Catalysis depends on lysine 160, which acts as the Proton donor. 166 to 167 (GT) lines the (S)-2,3,4,5-tetrahydrodipicolinate pocket.

Belongs to the DapB family.

It is found in the cytoplasm. The catalysed reaction is (S)-2,3,4,5-tetrahydrodipicolinate + NAD(+) + H2O = (2S,4S)-4-hydroxy-2,3,4,5-tetrahydrodipicolinate + NADH + H(+). It catalyses the reaction (S)-2,3,4,5-tetrahydrodipicolinate + NADP(+) + H2O = (2S,4S)-4-hydroxy-2,3,4,5-tetrahydrodipicolinate + NADPH + H(+). Its pathway is amino-acid biosynthesis; L-lysine biosynthesis via DAP pathway; (S)-tetrahydrodipicolinate from L-aspartate: step 4/4. Its function is as follows. Catalyzes the conversion of 4-hydroxy-tetrahydrodipicolinate (HTPA) to tetrahydrodipicolinate. This chain is 4-hydroxy-tetrahydrodipicolinate reductase, found in Pseudomonas fluorescens (strain ATCC BAA-477 / NRRL B-23932 / Pf-5).